Reading from the N-terminus, the 2448-residue chain is Cysteine repeat modular protein 1 (2448 aa).

A helical transmembrane segment spans residues 9 to 29 (TSTNLLNIFALYFSAICFIYC). 9 N-linked (GlcNAc...) asparagine glycosylation sites follow: Asn-48, Asn-89, Asn-248, Asn-284, Asn-461, Asn-503, Asn-542, Asn-598, and Asn-619. FU repeat units follow at residues 431-481 (KNTC…GYYF), 485-530 (FMQC…GFYI), 535-566 (NFKC…FYLS), and 567-611 (SNTC…GQFA). FU repeat units lie at residues 645 to 694 (NNQC…GYFP), 698 to 727 (TSVC…YYLQ), 728 to 772 (DSNC…GTFG), 775 to 813 (QNIC…ITNN), 819 to 868 (KGMC…YYLS), 904 to 947 (GRVC…GFPD), 950 to 983 (QNVC…LNPA), 984 to 1027 (NNIC…RTYP), 1063 to 1109 (QGAC…NQYV), and 1113 to 1144 (QNRC…GFYL). Residues Asn-761 and Asn-812 are each glycosylated (N-linked (GlcNAc...) asparagine). The N-linked (GlcNAc...) asparagine glycan is linked to Asn-934. Residue Asn-1002 is glycosylated (N-linked (GlcNAc...) asparagine). Asn-1146 carries an N-linked (GlcNAc...) asparagine glycan. The stretch at 1147-1193 (QTQCSICDISCLQCSGPGFDSCIQCAQGYYKLGDSVCVQSCPDGFFL) is one FU 15 repeat. Asn-1194 carries an N-linked (GlcNAc...) asparagine glycan. FU repeat units follow at residues 1197–1232 (NNQC…ISNQ), 1234–1279 (GIIC…GYRS), 1281–1332 (KGVC…GTFQ), 1346–1394 (SYYC…GFIL), and 1402–1436 (NQYC…GTVQ). 3 N-linked (GlcNAc...) asparagine glycosylation sites follow: Asn-1296, Asn-1328, and Asn-1365. Residues Asn-1506, Asn-1601, Asn-1628, and Asn-1670 are each glycosylated (N-linked (GlcNAc...) asparagine). Residues 1739–1773 (SDISCSLNLCMNSGKCVPNSIFCSCPSAFTGPKCQ) enclose the EGF-like domain. 3 disulfide bridges follow: Cys-1743–Cys-1754, Cys-1748–Cys-1761, and Cys-1763–Cys-1772. Residues Asn-1800, Asn-1849, Asn-1877, Asn-1942, Asn-2117, Asn-2155, and Asn-2179 are each glycosylated (N-linked (GlcNAc...) asparagine). 2 helical membrane-spanning segments follow: residues 2201–2221 (LYIM…YSAI) and 2238–2258 (IYFL…NQFV). Asn-2260 carries an N-linked (GlcNAc...) asparagine glycan. 4 consecutive transmembrane segments (helical) span residues 2267–2287 (SLTI…ILPF), 2296–2316 (ILTS…TIGV), 2352–2372 (MIGL…IGLC), and 2386–2406 (AVFL…IIVG).

It localises to the membrane. Functionally, required for mucocyst secretion. This Tetrahymena thermophila (strain SB210) protein is Cysteine repeat modular protein 1.